The following is a 313-amino-acid chain: Porphobilinogen deaminase (313 aa).

Residue Cys-242 is modified to S-(dipyrrolylmethanemethyl)cysteine.

This sequence belongs to the HMBS family. As to quaternary structure, monomer. Dipyrromethane is required as a cofactor.

The catalysed reaction is 4 porphobilinogen + H2O = hydroxymethylbilane + 4 NH4(+). Its pathway is porphyrin-containing compound metabolism; protoporphyrin-IX biosynthesis; coproporphyrinogen-III from 5-aminolevulinate: step 2/4. In terms of biological role, tetrapolymerization of the monopyrrole PBG into the hydroxymethylbilane pre-uroporphyrinogen in several discrete steps. This is Porphobilinogen deaminase from Pseudomonas aeruginosa (strain UCBPP-PA14).